Here is a 141-residue protein sequence, read N- to C-terminus: Small ribosomal subunit protein bS6 (141 aa).

A disordered region spans residues 96 to 141 (VTGQSEMLKAEENRSERRERRERPEHADSAEGDDSNDSDSSDNADE). The segment covering 103–124 (LKAEENRSERRERRERPEHADS) has biased composition (basic and acidic residues). Residues 125–141 (AEGDDSNDSDSSDNADE) show a composition bias toward acidic residues.

It belongs to the bacterial ribosomal protein bS6 family.

Functionally, binds together with bS18 to 16S ribosomal RNA. The polypeptide is Small ribosomal subunit protein bS6 (Pseudomonas putida (strain ATCC 700007 / DSM 6899 / JCM 31910 / BCRC 17059 / LMG 24140 / F1)).